A 263-amino-acid chain; its full sequence is Endonuclease 8 (263 aa).

P2 serves as the catalytic Schiff-base intermediate with DNA. The active-site Proton donor is E3. K53 acts as the Proton donor; for beta-elimination activity in catalysis. The DNA site is built by Q70, R125, and N169. The FPG-type zinc-finger motif lies at K229–S263. Residue R253 is the Proton donor; for delta-elimination activity of the active site.

Belongs to the FPG family. It depends on Zn(2+) as a cofactor.

It carries out the reaction 2'-deoxyribonucleotide-(2'-deoxyribose 5'-phosphate)-2'-deoxyribonucleotide-DNA = a 3'-end 2'-deoxyribonucleotide-(2,3-dehydro-2,3-deoxyribose 5'-phosphate)-DNA + a 5'-end 5'-phospho-2'-deoxyribonucleoside-DNA + H(+). In terms of biological role, involved in base excision repair of DNA damaged by oxidation or by mutagenic agents. Acts as a DNA glycosylase that recognizes and removes damaged bases. Has a preference for oxidized pyrimidines, such as thymine glycol, 5,6-dihydrouracil and 5,6-dihydrothymine. Has AP (apurinic/apyrimidinic) lyase activity and introduces nicks in the DNA strand. Cleaves the DNA backbone by beta-delta elimination to generate a single-strand break at the site of the removed base with both 3'- and 5'-phosphates. The protein is Endonuclease 8 of Pectobacterium atrosepticum (strain SCRI 1043 / ATCC BAA-672) (Erwinia carotovora subsp. atroseptica).